Consider the following 607-residue polypeptide: Runt-related transcription factor 2 (607 aa).

The segment at 1-88 (MLHSPHKQPQ…TMASNSLFSA (88 aa)) is interaction with IFI204. Residues 100 to 112 (PSTSRRFSPPSSS) show a composition bias toward low complexity. The tract at residues 100–126 (PSTSRRFSPPSSSLQPGKMSDVSPVVA) is disordered. A Runt domain is found at 187 to 315 (TMVEIIADHP…TVDGPREPRR (129 aa)). The interval 242–258 (VMAGNDENYSAELRNAS) is required for interaction with FOXO1. Positions 307 to 430 (VDGPREPRRH…VPRRISDDDT (124 aa)) are disordered. Lys324 is covalently cross-linked (Glycyl lysine isopeptide (Lys-Gly) (interchain with G-Cter in SUMO2)). Position 353 is an asymmetric dimethylarginine (Arg353). The segment covering 353 to 412 (RPSLNSAPSPFNPQGQSQITDPRQAQSSPPWSYDQSYPSYLSQMTSPSIHSTTPLSSTRG) has biased composition (polar residues). Positions 422–525 (PRRISDDDTA…SQSQSGPFQT (104 aa)) are interaction with KAT6A. Residues 460–554 (RQFPSISSLT…VPGGDRSPSR (95 aa)) are interaction with KAT6B. Residue Ser537 is modified to Phosphoserine; by CDK1. Positions 548-607 (GDRSPSRMVPPCTTTSNGSTLLNPNLPNQNDGVDADGSHSSSPTVLNSSGRMDESVWRPY) are disordered. Polar residues-rich tracts occupy residues 559 to 578 (CTTTSNGSTLLNPNLPNQND) and 585 to 597 (SHSSSPTVLNSSG). Residues 598–607 (RMDESVWRPY) are compositionally biased toward basic and acidic residues.

In terms of assembly, heterodimer of an alpha and a beta subunit. The alpha subunit binds DNA as a monomer and through the Runt domain. DNA-binding is increased by heterodimerization. Interacts with XRCC6 (Ku70) and XRCC5 (Ku80). Interacts with CCNB1, KAT6A and KAT6B. Interacts with HIVEP3. Interacts with IFI204. Interaction with SATB2; the interaction results in enhanced DNA binding and transactivation by these transcription factors. Binds to HIPK3. Interacts with FOXO1 (via a C-terminal region); the interaction inhibits RUNX2 transcriptional activity towards BGLAP. Interacts with FOXP3. Interacts with TMEM119. Interacts with OLFM2. Interacts with IPO7; the interaction inhibits RUNX2 nuclear translocation in osteoblasts. Interacts with DDX5. Phosphorylated; probably by MAP kinases (MAPK). Phosphorylation by HIPK3 is required for the SPEN/MINT and FGF2 transactivation during osteoblastic differentiation. Phosphorylation at Ser-537 by CDK1 promotes endothelial cell proliferation required for tumor angiogenesis probably by facilitating cell cycle progression. In terms of tissue distribution, found in thymus and testis, T-cell lines but not in B-cell lines. Isoform 2 is exclusively found in bone, particularly in osteoblasts; isoforms 3 and 4 are expressed in T-cell lines; isoforms 5, 6, 7, 8 and 9 can be found in osteoblasts and osteosarcoma cell lines.

The protein localises to the nucleus. Its subcellular location is the cytoplasm. In terms of biological role, transcription factor involved in osteoblastic differentiation and skeletal morphogenesis. Essential for the maturation of osteoblasts and both intramembranous and endochondral ossification. CBF binds to the core site, 5'-PYGPYGGT-3', of a number of enhancers and promoters, including murine leukemia virus, polyomavirus enhancer, T-cell receptor enhancers, osteocalcin, osteopontin, bone sialoprotein, alpha 1(I) collagen, LCK, IL-3 and GM-CSF promoters. Inhibits KAT6B-dependent transcriptional activation. In osteoblasts, supports transcription activation: synergizes with SPEN/MINT to enhance FGFR2-mediated activation of the osteocalcin FGF-responsive element (OCFRE). This chain is Runt-related transcription factor 2 (Runx2), found in Mus musculus (Mouse).